Consider the following 79-residue polypeptide: ATP synthase subunit c (79 aa).

2 consecutive transmembrane segments (helical) span residues 11 to 31 (MAAAIMMGLAAIGAAIGIGIL) and 53 to 73 (FFIVMGLVDAIPMIAVGLGLY).

The protein belongs to the ATPase C chain family. In terms of assembly, F-type ATPases have 2 components, F(1) - the catalytic core - and F(0) - the membrane proton channel. F(1) has five subunits: alpha(3), beta(3), gamma(1), delta(1), epsilon(1). F(0) has three main subunits: a(1), b(2) and c(10-14). The alpha and beta chains form an alternating ring which encloses part of the gamma chain. F(1) is attached to F(0) by a central stalk formed by the gamma and epsilon chains, while a peripheral stalk is formed by the delta and b chains.

It is found in the cell inner membrane. Its function is as follows. F(1)F(0) ATP synthase produces ATP from ADP in the presence of a proton or sodium gradient. F-type ATPases consist of two structural domains, F(1) containing the extramembraneous catalytic core and F(0) containing the membrane proton channel, linked together by a central stalk and a peripheral stalk. During catalysis, ATP synthesis in the catalytic domain of F(1) is coupled via a rotary mechanism of the central stalk subunits to proton translocation. Functionally, key component of the F(0) channel; it plays a direct role in translocation across the membrane. A homomeric c-ring of between 10-14 subunits forms the central stalk rotor element with the F(1) delta and epsilon subunits. The chain is ATP synthase subunit c from Yersinia enterocolitica serotype O:8 / biotype 1B (strain NCTC 13174 / 8081).